The chain runs to 110 residues: Transcription factor S (110 aa).

Positions 4, 7, 22, 25, 71, 74, 99, and 102 each coordinate Zn(2+). The segment at 4–25 (CPKCGNLMLPDRKRKVWVCRSC) adopts a C4-type zinc-finger fold. The TFIIS-type zinc-finger motif lies at 67 to 107 (TKITCPKCGNDTAYWWEMQTRAGDEPSTIFYKCTKCGHTWR).

Belongs to the archaeal RpoM/eukaryotic RPA12/RPB9/RPC11 RNA polymerase family.

Its function is as follows. Induces RNA cleavage activity in the RNA polymerase. In its presence, the cleavage activity of the RNA polymerase truncates the RNA back to position +15 in a stepwise manner by releasing mainly dinucleotides from the 3'-end of the nascent RNA. The truncated RNAs are able to continue elongation. Involved in transcriptional proofreading and fidelity. Misincorporation of nucleotides during elongation of transcription leads to arrested elongation complexes which are rescued by TFS-promoted removal of a dinucleotide from the 3'-end. TFS is able to induce a cleavage resynthesis cycle in stalled elongation complexes (resulting from the next missing nucleotide or a reduced incorporation rate of a wrong nucleotide) preventing misincorporation and enabling proofreading in a post-incorporation manner. Pausing of elongation complexes is the main determinant of TFS-induced RNA cleavage. The chain is Transcription factor S from Thermococcus celer.